A 468-amino-acid polypeptide reads, in one-letter code: UDP-N-acetylmuramoyl-L-alanine--L-glutamate ligase (468 aa).

Residue 122–128 coordinates ATP; the sequence is GTKGKST.

Belongs to the MurCDEF family. MurD2 subfamily.

It is found in the cytoplasm. The catalysed reaction is UDP-N-acetyl-alpha-D-muramoyl-L-alanine + L-glutamate + ATP = UDP-N-acetyl-alpha-D-muramoyl-L-alanyl-L-glutamate + ADP + phosphate + H(+). The protein operates within cell wall biogenesis; peptidoglycan biosynthesis. In terms of biological role, cell wall formation. Catalyzes the addition of L-glutamate to the nucleotide precursor UDP-N-acetylmuramoyl-L-alanine. This chain is UDP-N-acetylmuramoyl-L-alanine--L-glutamate ligase, found in Xylella fastidiosa (strain Temecula1 / ATCC 700964).